The primary structure comprises 437 residues: Proton/glutamate-aspartate symporter (437 aa).

The Cytoplasmic portion of the chain corresponds to 1 to 5 (MKNIK). Residues 6-26 (FSLAWQILFAMVLGILLGSYL) traverse the membrane as a helical segment. The Periplasmic portion of the chain corresponds to 27-50 (HYHSDSRDWLVVNLLSPAGDIFIH). Residues 51–71 (LIKMIVVPIVISTLVVGIAGV) form a helical membrane-spanning segment. Residues 72-84 (GDAKQLGRIGAKT) lie on the Cytoplasmic side of the membrane. A helical transmembrane segment spans residues 85–105 (IIYFEVITTVAIILGITLANV). Over 106 to 159 (FQPGAGVDMSQLATVDISKYQSTTEAVQSSSHGIMGTILSLVPTNIVASMAKGE) the chain is Periplasmic. The chain crosses the membrane as a helical span at residues 160-180 (MLPIIFFSVLFGLGLSSLPAT). Residues 181 to 210 (HREPLVTVFRSISETMFKVTHMVMRYAPVG) are Cytoplasmic-facing. The helical transmembrane segment at 211–231 (VFALIAVTVANFGFSSLWPLA) threads the bilayer. A topological domain (periplasmic) is located at residue lysine 232. Residues 233–253 (LVLLVHFAILFFALVVLGIVA) traverse the membrane as a helical segment. At 254-292 (RLCGLSVWILIRILKDELILAYSTASSESVLPRIIEKME) the chain is on the cytoplasmic side. A helical membrane pass occupies residues 293-313 (AYGAPVSITSFVVPTGYSFNL). Residues 314 to 324 (DGSTLYQSIAA) are Periplasmic-facing. Residues 325-345 (IFIAQLYGIDLSIWQEIILVL) form a helical membrane-spanning segment. The Cytoplasmic segment spans residues 346-361 (TLMVTSKGIAGVPGVS). Residues 362 to 382 (FVVLLATLGSVGIPLEGLAFI) traverse the membrane as a helical segment. Over 383 to 387 (AGVDR) the chain is Periplasmic. Residues 388–408 (ILDMARTALNVVGNALAVLVI) form a helical membrane-spanning segment. Topologically, residues 409-437 (AKWEHKFDRKKALAYEREVLGKFDKTADQ) are cytoplasmic.

It belongs to the dicarboxylate/amino acid:cation symporter (DAACS) (TC 2.A.23) family. GltP subfamily.

The protein resides in the cell inner membrane. Its activity is regulated as follows. Glutamate uptake is inhibited by L-cysteate and beta-hydroxyaspartate. Inhibited by the uncoupler carbonylcyanide m-chlorophenylhydrazone (CCCP). Catalyzes the proton-dependent, binding-protein-independent transport of glutamate and aspartate. The sequence is that of Proton/glutamate-aspartate symporter from Escherichia coli (strain K12).